The primary structure comprises 306 residues: Aspartate carbamoyltransferase catalytic subunit (306 aa).

Carbamoyl phosphate-binding residues include R55 and T56. K84 provides a ligand contact to L-aspartate. Carbamoyl phosphate is bound by residues R105, H133, and Q136. Residues R166 and R227 each coordinate L-aspartate. Residues L265 and P266 each coordinate carbamoyl phosphate.

Belongs to the aspartate/ornithine carbamoyltransferase superfamily. ATCase family. In terms of assembly, heterododecamer (2C3:3R2) of six catalytic PyrB chains organized as two trimers (C3), and six regulatory PyrI chains organized as three dimers (R2).

It catalyses the reaction carbamoyl phosphate + L-aspartate = N-carbamoyl-L-aspartate + phosphate + H(+). The protein operates within pyrimidine metabolism; UMP biosynthesis via de novo pathway; (S)-dihydroorotate from bicarbonate: step 2/3. Catalyzes the condensation of carbamoyl phosphate and aspartate to form carbamoyl aspartate and inorganic phosphate, the committed step in the de novo pyrimidine nucleotide biosynthesis pathway. This is Aspartate carbamoyltransferase catalytic subunit from Neisseria meningitidis serogroup C (strain 053442).